The chain runs to 531 residues: Maturase K (531 aa).

The protein belongs to the intron maturase 2 family. MatK subfamily.

It localises to the plastid. The protein localises to the chloroplast. Functionally, usually encoded in the trnK tRNA gene intron. Probably assists in splicing its own and other chloroplast group II introns. This is Maturase K from Ephedra sinica (Chinese ephedra).